Consider the following 441-residue polypeptide: Tryptophan aminotransferase-related protein 1 (441 aa).

Residues tyrosine 110, 152-153, asparagine 219, 239-242, 262-265, and arginine 273 contribute to the pyridoxal 5'-phosphate site; these read ST, DLAY, and TVSK. Residue lysine 265 is modified to N6-(pyridoxal phosphate)lysine.

The protein belongs to the alliinase family. Requires pyridoxal 5'-phosphate as cofactor. Highly expressed in anthers. Expressed at low levels in ovaries.

It carries out the reaction L-tryptophan + 2-oxoglutarate = indole-3-pyruvate + L-glutamate. It participates in plant hormone metabolism; auxin biosynthesis. Functionally, probable tryptophan aminotransferase that may be involved in the regulation of auxin production in developing rice grains. This chain is Tryptophan aminotransferase-related protein 1, found in Oryza sativa subsp. japonica (Rice).